A 250-amino-acid polypeptide reads, in one-letter code: 2,3-bisphosphoglycerate-dependent phosphoglycerate mutase (250 aa).

Residues 8 to 15 (RHGESEWN), 21 to 22 (TG), Arg60, 87 to 90 (ERHY), Lys98, 114 to 115 (RR), and 183 to 184 (GN) contribute to the substrate site. His9 functions as the Tele-phosphohistidine intermediate in the catalytic mechanism. Residue Glu87 is the Proton donor/acceptor of the active site.

The protein belongs to the phosphoglycerate mutase family. BPG-dependent PGAM subfamily.

The enzyme catalyses (2R)-2-phosphoglycerate = (2R)-3-phosphoglycerate. It functions in the pathway carbohydrate degradation; glycolysis; pyruvate from D-glyceraldehyde 3-phosphate: step 3/5. Functionally, catalyzes the interconversion of 2-phosphoglycerate and 3-phosphoglycerate. The chain is 2,3-bisphosphoglycerate-dependent phosphoglycerate mutase from Borrelia duttonii (strain Ly).